The following is a 67-amino-acid chain: Probable Sec-independent protein translocase protein TatE (67 aa).

The helical transmembrane segment at I4 to G21 threads the bilayer.

Belongs to the TatA/E family. TatE subfamily.

Its subcellular location is the cell inner membrane. Its function is as follows. Part of the twin-arginine translocation (Tat) system that transports large folded proteins containing a characteristic twin-arginine motif in their signal peptide across membranes. TatE shares overlapping functions with TatA. This is Probable Sec-independent protein translocase protein TatE from Shigella flexneri.